The sequence spans 515 residues: Protein DETOXIFICATION 32 (515 aa).

Over residues 1–26 (METLNVDHEDTISSEQEHRAHTKSDT) the composition is skewed to basic and acidic residues. A disordered region spans residues 1 to 30 (METLNVDHEDTISSEQEHRAHTKSDTDMPP). The next 12 membrane-spanning stretches (helical) occupy residues 48 to 68 (LWWL…LGAV), 90 to 110 (VISG…ATLC), 131 to 151 (IILN…TPLL), 167 to 187 (FSLW…TAKF), 194 to 214 (VIAM…LSWL), 225 to 245 (GGAV…IVYI), 276 to 296 (AVMV…AGYL), 303 to 323 (VAAL…AFGF), 347 to 367 (LIVA…TLIV), 392 to 412 (LLAL…VAVG), 418 to 438 (IVAY…GLVL), and 448 to 468 (GIWT…LFII). Over residues 488–497 (GDQSNKREEI) the composition is skewed to basic and acidic residues. The segment at 488–515 (GDQSNKREEIDLCEEDENNSNGENNHRK) is disordered. The span at 506–515 (NSNGENNHRK) shows a compositional bias: low complexity.

Belongs to the multi antimicrobial extrusion (MATE) (TC 2.A.66.1) family.

The protein localises to the membrane. In Arabidopsis thaliana (Mouse-ear cress), this protein is Protein DETOXIFICATION 32.